The sequence spans 361 residues: P2Y purinoceptor 4 (361 aa).

The interval 1 to 20 is disordered; that stretch reads MTSAESLLFTSLGPSPSSGD. At 1–30 the chain is on the extracellular side; it reads MTSAESLLFTSLGPSPSSGDGDCRFNEEFK. A helical transmembrane segment spans residues 31–58; sequence FILLPMSYAVVFVLGLALNAPTLWLFLF. Topologically, residues 59 to 68 are cytoplasmic; that stretch reads RLRPWDATAT. A helical transmembrane segment spans residues 69-91; the sequence is YMFHLALSDTLYVLSLPTLVYYY. At 92–108 the chain is on the extracellular side; that stretch reads AARNHWPFGTGLCKFVR. An intrachain disulfide couples Cys-104 to Cys-181. A helical membrane pass occupies residues 109–127; it reads FLFYWNLYCSVLFLTCISV. The Cytoplasmic segment spans residues 128-149; that stretch reads HRYLGICHPLRAIRWGRPRFAS. The helical transmembrane segment at 150–170 threads the bilayer; it reads LLCLGVWLVVAGCLVPNLFFV. Residues 171–192 lie on the Extracellular side of the membrane; it reads TTNANGTTILCHDTTLPEEFDH. N-linked (GlcNAc...) asparagine glycosylation occurs at Asn-175. Residues 193–218 form a helical membrane-spanning segment; that stretch reads YVYFSSAVMVLLFGLPFLITLVCYGL. Topologically, residues 219-242 are cytoplasmic; sequence MARRLYRPLPGAGQSSSRLRSLRT. The chain crosses the membrane as a helical span at residues 243–265; sequence IAVVLTVFAVCFVPFHITRTIYY. The Extracellular portion of the chain corresponds to 266-283; it reads QARLLQADCHVLNIVNVV. Residues 284–305 form a helical membrane-spanning segment; that stretch reads YKVTRPLASANSCLDPVLYLFT. Residues 306 to 361 lie on the Cytoplasmic side of the membrane; it reads GDKYRNQLQQLCRGSKPKPRTAASSLALVTLHEESISRWADTHQDSTFSAYEGDRL.

It belongs to the G-protein coupled receptor 1 family. Post-translationally, phosphorylation of Ser-329 and Ser-330 is a key step in agonist-dependent desensitization and loss of surface P2RY4. This phosphorylation does not involve PKC, nor other calcium-activated kinases. Widely expressed at low levels. In brain, higher expression in the pineal gland and ventricular system.

Its subcellular location is the cell membrane. Functionally, receptor for ATP and UTP coupled to G-proteins that activate a phosphatidylinositol-calcium second messenger system. Not activated by ADP or UDP. This chain is P2Y purinoceptor 4 (P2ry4), found in Rattus norvegicus (Rat).